Consider the following 255-residue polypeptide: Pyridoxine 5'-phosphate synthase (255 aa).

Asn-8 and Arg-19 together coordinate 3-amino-2-oxopropyl phosphate. The active-site Proton acceptor is His-44. Arg-46 and His-51 together coordinate 1-deoxy-D-xylulose 5-phosphate. Catalysis depends on Glu-74, which acts as the Proton acceptor. Thr-111 is a 1-deoxy-D-xylulose 5-phosphate binding site. His-202 acts as the Proton donor in catalysis. 3-amino-2-oxopropyl phosphate-binding positions include Asp-203 and 225–226; that span reads GH.

It belongs to the PNP synthase family. As to quaternary structure, homooctamer; tetramer of dimers.

It localises to the cytoplasm. The catalysed reaction is 3-amino-2-oxopropyl phosphate + 1-deoxy-D-xylulose 5-phosphate = pyridoxine 5'-phosphate + phosphate + 2 H2O + H(+). It functions in the pathway cofactor biosynthesis; pyridoxine 5'-phosphate biosynthesis; pyridoxine 5'-phosphate from D-erythrose 4-phosphate: step 5/5. Catalyzes the complicated ring closure reaction between the two acyclic compounds 1-deoxy-D-xylulose-5-phosphate (DXP) and 3-amino-2-oxopropyl phosphate (1-amino-acetone-3-phosphate or AAP) to form pyridoxine 5'-phosphate (PNP) and inorganic phosphate. This Xanthomonas axonopodis pv. citri (strain 306) protein is Pyridoxine 5'-phosphate synthase.